The primary structure comprises 396 residues: Phosphoglycerate kinase (396 aa).

Residues aspartate 23–asparagine 25, arginine 38, histidine 61–lysine 64, arginine 122, and arginine 155 each bind substrate. Residues lysine 206, glycine 296, glutamate 327, and glycine 353–serine 356 contribute to the ATP site.

This sequence belongs to the phosphoglycerate kinase family. As to quaternary structure, monomer.

The protein resides in the cytoplasm. It catalyses the reaction (2R)-3-phosphoglycerate + ATP = (2R)-3-phospho-glyceroyl phosphate + ADP. It functions in the pathway carbohydrate degradation; glycolysis; pyruvate from D-glyceraldehyde 3-phosphate: step 2/5. In Clostridium botulinum (strain Eklund 17B / Type B), this protein is Phosphoglycerate kinase.